We begin with the raw amino-acid sequence, 555 residues long: Beta-caryophyllene synthase (555 aa).

D313, D317, D456, and E464 together coordinate Mg(2+). The DDXXD motif signature appears at 313–317 (DDIYD).

The protein belongs to the terpene synthase family. Mg(2+) serves as cofactor.

It catalyses the reaction (2E,6E)-farnesyl diphosphate = (+)-(E)-beta-caryophyllene + diphosphate. The protein operates within secondary metabolite biosynthesis; terpenoid biosynthesis. In terms of biological role, sesquiterpene synthase converting farnesyl diphosphate to beta-caryophyllene as the major product. This is Beta-caryophyllene synthase from Phyla dulcis (Aztec sweet herb).